The sequence spans 114 residues: Protein U68 (114 aa).

It belongs to the herpesviridae UL96 family.

The chain is Protein U68 (U68) from Homo sapiens (Human).